Reading from the N-terminus, the 295-residue chain is Protoheme IX farnesyltransferase (295 aa).

The next 9 helical transmembrane spans lie at isoleucine 8 to alanine 28, glycine 35 to phenylalanine 55, glycine 83 to glycine 103, leucine 107 to leucine 127, isoleucine 132 to alanine 152, leucine 162 to phenylalanine 182, isoleucine 208 to alanine 228, glycine 229 to arginine 249, and valine 263 to glutamine 283.

Belongs to the UbiA prenyltransferase family. Protoheme IX farnesyltransferase subfamily.

Its subcellular location is the cell inner membrane. The enzyme catalyses heme b + (2E,6E)-farnesyl diphosphate + H2O = Fe(II)-heme o + diphosphate. The protein operates within porphyrin-containing compound metabolism; heme O biosynthesis; heme O from protoheme: step 1/1. Converts heme B (protoheme IX) to heme O by substitution of the vinyl group on carbon 2 of heme B porphyrin ring with a hydroxyethyl farnesyl side group. This Chromohalobacter salexigens (strain ATCC BAA-138 / DSM 3043 / CIP 106854 / NCIMB 13768 / 1H11) protein is Protoheme IX farnesyltransferase.